A 760-amino-acid chain; its full sequence is NAD(P)H-quinone oxidoreductase subunit 5, chloroplastic (760 aa).

16 helical membrane-spanning segments follow: residues 9–29, 39–59, 89–109, 125–145, 147–167, 185–205, 221–241, 260–280, 282–302, 329–349, 356–376, 398–418, 429–449, 556–576, 620–640, and 734–754; these read WIIS…LLLF, IWAF…TDLF, IDPL…LVLV, FVYM…SNLI, IYIF…FWFT, GDFG…SFEF, NEVH…GAIA, TPIS…FLVA, LLPL…IGII, LGYT…FHLI, ALLF…VGYS, IAFL…CFWS, YSPI…FYMF, ILFP…IGIP, FSVS…KPIY, and FYLL…SSIF.

Belongs to the complex I subunit 5 family. NDH is composed of at least 16 different subunits, 5 of which are encoded in the nucleus.

The protein localises to the plastid. It is found in the chloroplast thylakoid membrane. It catalyses the reaction a plastoquinone + NADH + (n+1) H(+)(in) = a plastoquinol + NAD(+) + n H(+)(out). The catalysed reaction is a plastoquinone + NADPH + (n+1) H(+)(in) = a plastoquinol + NADP(+) + n H(+)(out). In terms of biological role, NDH shuttles electrons from NAD(P)H:plastoquinone, via FMN and iron-sulfur (Fe-S) centers, to quinones in the photosynthetic chain and possibly in a chloroplast respiratory chain. The immediate electron acceptor for the enzyme in this species is believed to be plastoquinone. Couples the redox reaction to proton translocation, and thus conserves the redox energy in a proton gradient. This Populus alba (White poplar) protein is NAD(P)H-quinone oxidoreductase subunit 5, chloroplastic (ndhF).